Here is a 247-residue protein sequence, read N- to C-terminus: Protein AC124 (247 aa).

The protein resides in the host cytoplasm. It localises to the host nucleus. In terms of biological role, accelerates mortality in insect larvae. This chain is Protein AC124, found in Lepidoptera (butterflies and moths).